The primary structure comprises 195 residues: 3-isopropylmalate dehydratase small subunit (195 aa).

The protein belongs to the LeuD family. LeuD type 1 subfamily. In terms of assembly, heterodimer of LeuC and LeuD.

It carries out the reaction (2R,3S)-3-isopropylmalate = (2S)-2-isopropylmalate. It participates in amino-acid biosynthesis; L-leucine biosynthesis; L-leucine from 3-methyl-2-oxobutanoate: step 2/4. In terms of biological role, catalyzes the isomerization between 2-isopropylmalate and 3-isopropylmalate, via the formation of 2-isopropylmaleate. The protein is 3-isopropylmalate dehydratase small subunit of Frankia casuarinae (strain DSM 45818 / CECT 9043 / HFP020203 / CcI3).